The chain runs to 168 residues: UPF0114 protein PC1_0431 (168 aa).

The next 3 helical transmembrane spans lie at 15–35, 53–73, and 136–156; these read LLAPVYLGLSLGLLALAIKFF, LVLVLLSLIDMTLVGGLLVMV, and LMWYVIIHLTFVLSALVMGYL.

It belongs to the UPF0114 family.

Its subcellular location is the cell membrane. This is UPF0114 protein PC1_0431 from Pectobacterium carotovorum subsp. carotovorum (strain PC1).